Reading from the N-terminus, the 174-residue chain is Transcription factor bHLH168 (174 aa).

The bHLH domain maps to 14–63 (SLREQRNLREKERRMRMKHLFSILSSHVSPTRRLPVPQLIDQAVSYMIQL).

It belongs to the bHLH protein family.

The protein localises to the nucleus. In Arabidopsis thaliana (Mouse-ear cress), this protein is Transcription factor bHLH168.